The following is a 31-amino-acid chain: Cytochrome b6-f complex subunit 6 (31 aa).

A helical transmembrane segment spans residues 4 to 24 (ITSYFGFLLVALTITSALFIG).

This sequence belongs to the PetL family. The 4 large subunits of the cytochrome b6-f complex are cytochrome b6, subunit IV (17 kDa polypeptide, PetD), cytochrome f and the Rieske protein, while the 4 small subunits are PetG, PetL, PetM and PetN. The complex functions as a dimer.

It is found in the plastid. Its subcellular location is the chloroplast thylakoid membrane. In terms of biological role, component of the cytochrome b6-f complex, which mediates electron transfer between photosystem II (PSII) and photosystem I (PSI), cyclic electron flow around PSI, and state transitions. PetL is important for photoautotrophic growth as well as for electron transfer efficiency and stability of the cytochrome b6-f complex. This Pelargonium hortorum (Common geranium) protein is Cytochrome b6-f complex subunit 6.